Reading from the N-terminus, the 2527-residue chain is Leucine-rich repeat serine/threonine-protein kinase 2 (2527 aa).

Positions 1-969 (MASGACQGCE…RSSRLPSHMR (969 aa)) are required for RAB29-mediated activation. A coiled-coil region spans residues 9-33 (CEEEEEEEALKKLIVRLNNVQEGKQ). 4 positions are modified to phosphoserine: Ser910, Ser935, Ser955, and Ser973. The tract at residues 957–979 (ESLRSSRLPSHMRQSDSSSSLAS) is disordered. Residues 961–978 (SSRLPSHMRQSDSSSSLA) are compositionally biased toward low complexity. 13 LRR repeats span residues 983-1004 (HITSLDLSANELKDIDALSQKC), 1012-1033 (HLTKLELHQNSLTSFPQQLCET), 1036-1057 (CLIHLDLHSNKFTSFPSFVLKM), 1059-1080 (RITNLDASRNDIGPTVVLDPAM), 1084-1105 (SLKQLNLSYNQLSSIPENLAQV), 1108-1129 (KLEQLLLEGNKISGICSPLSLK), 1130-1150 (ELKILNLSKNHIPSLPGDFLE), 1156-1171 (ESFSARMNFLAAMPAL), 1174-1196 (SITSLKLSQNSFTCIPEAIFSLP), 1197-1218 (HLRSLDMSHNNIECLPGPAHWK), 1221-1245 (NLRELIFSKNQISTLDFSENPHVWS), 1246-1267 (RVEKLHLSHNKLKEIPPEIGCL), and 1269-1291 (NLTSLDVSYNLELRSFPNEMGKL). At Ser1292 the chain carries Phosphoserine; by autocatalysis. The 184-residue stretch at 1328–1511 (KAVPYNRMKL…KTIINESLNF (184 aa)) folds into the Roc domain. Residue 1341 to 1348 (GNTGSGKT) participates in GTP binding. Ser1444 carries the phosphoserine modification. The 198-residue stretch at 1543–1740 (TEFPVINRKH…RMYWRQGIYL (198 aa)) folds into the COR domain. Positions 1879-2146 (EAPEFLLGDG…LICLMRHILI (268 aa)) constitute a Protein kinase domain. ATP is bound by residues Leu1885, Asp1887, Gly1888, Gly1891, Val1893, Ala1904, Lys1906, Met1947, Glu1948, Ala1950, Ser1954, and Arg1957. Asp1994 acts as the Proton acceptor in catalysis. The ATP site is built by His1998, Leu2001, Ala2016, and Asp2017. 2098 to 2121 (EYGCAPWPMVEKLITKCLKENPQE) is a GTP binding site. WD repeat units lie at residues 2139 to 2183 (CLMR…SLFD), 2188 to 2228 (RYSY…LVIN), 2233 to 2276 (TKRH…MIFE), 2281 to 2327 (KCKG…FSFS), 2333 to 2377 (QKLI…EVWD), 2402 to 2438 (KESKHQLSYSGRVKALCLQKNTALWIGTGGGHILLLD), and 2443 to 2497 (RVIR…SIWD). GTP is bound at residue 2295–2298 (DVST).

It belongs to the protein kinase superfamily. TKL Ser/Thr protein kinase family. Homodimer. Homotetramer; when activated by GTP-bound RAB29. Interacts with PRKN, PRDX3 and TPCN2. Interacts with VPS35. Interacts (via N-terminus) with RAB29; this interaction is direct and stimulates kinase activity. Interacts (via ROC domain) with SEC16A. Interacts with APP; interaction promotes phosphorylation of 'Thr-743' of APP. Interacts with MAPT. Interacts with RAB8A, RAB10, and RAB12. Interacts (via N-terminus) with RAB32. Interacts with YWHAG; this interaction is dependent on phosphorylation of Ser-910 and either Ser-935 or Ser-1444. Interacts with SFN; this interaction is dependent on phosphorylation of Ser-910 and/or Ser-935. Mg(2+) serves as cofactor. Autophosphorylated at Ser-1292. Autophosphorylation is stimulated by RAB29. Phosphorylation of Ser-910 and Ser-935 or Ser-1444 facilitates interaction with YWHAG. Phosphorylation of Ser-910 and/or Ser-935 facilitates interaction with SFN. In terms of processing, ubiquitinated by TRIM1; undergoes 'Lys-48'-linked polyubiquitination leading to proteasomal degradation. As to expression, expressed in the brain (at protein level). Detected throughout the adult brain. Expressed in deep cerebral cortex layers, superficial cingulate cortex layers, the piriform cortex, hippocampal formation, caudate putamen, substantia nigra, the basolateral and basomedial anterior amygdala nuclei, reticular thalamic nucleus and also in the cerebellar granular cell layer. Highly expressed in the striatum, cortex and olfactory tubercle. Little or no expression in the substantia nigra, where dopaminergic neurons preferentially degenerate in Parkinson disease. Expression is particularly high in brain dopaminoceptive areas. High and strikingly specific expression in striatum and parts of cortex and no signals in dopamine neurons.

The protein localises to the cytoplasmic vesicle. It is found in the perikaryon. Its subcellular location is the cell projection. It localises to the axon. The protein resides in the dendrite. The protein localises to the golgi apparatus membrane. It is found in the endoplasmic reticulum membrane. Its subcellular location is the secretory vesicle. It localises to the synaptic vesicle membrane. The protein resides in the endosome. The protein localises to the lysosome. It is found in the mitochondrion outer membrane. Its subcellular location is the cytoplasm. It localises to the cytoskeleton. The protein resides in the phagosome. It carries out the reaction L-threonyl-[protein] + ATP = O-phospho-L-threonyl-[protein] + ADP + H(+). It catalyses the reaction L-seryl-[protein] + ATP = O-phospho-L-seryl-[protein] + ADP + H(+). The enzyme catalyses GTP + H2O = GDP + phosphate + H(+). With respect to regulation, kinase activity is regulated by the GTPase activity of the ROC domain. GTP-bound LRRK2 kinase activity is stimulated by RAB29. Phosphorylation of RAB10 'Thr-73' is stimulated by RAB29 and RAB32. Inhibited by small molecule inhibitors MLi-2 and LRRK2-IN-1. Its function is as follows. Serine/threonine-protein kinase which phosphorylates a broad range of proteins involved in multiple processes such as neuronal plasticity, innate immunity, autophagy, and vesicle trafficking. Is a key regulator of RAB GTPases by regulating the GTP/GDP exchange and interaction partners of RABs through phosphorylation. Phosphorylates RAB3A, RAB3B, RAB3C, RAB3D, RAB8A, RAB8B, RAB10, RAB12, RAB29, RAB35, and RAB43. Regulates the RAB3IP-catalyzed GDP/GTP exchange for RAB8A through the phosphorylation of 'Thr-72' on RAB8A. Inhibits the interaction between RAB8A and GDI1 and/or GDI2 by phosphorylating 'Thr-72' on RAB8A. Regulates primary ciliogenesis through phosphorylation of RAB8A and RAB10, which promotes SHH signaling in the brain. Together with RAB29, plays a role in the retrograde trafficking pathway for recycling proteins, such as mannose-6-phosphate receptor (M6PR), between lysosomes and the Golgi apparatus in a retromer-dependent manner. Regulates neuronal process morphology in the intact central nervous system (CNS). Plays an important role in recruiting SEC16A to endoplasmic reticulum exit sites (ERES) and in regulating ER to Golgi vesicle-mediated transport and ERES organization. Positively regulates autophagy through a calcium-dependent activation of the CaMKK/AMPK signaling pathway. The process involves activation of nicotinic acid adenine dinucleotide phosphate (NAADP) receptors, increase in lysosomal pH, and calcium release from lysosomes. Phosphorylates PRDX3. By phosphorylating APP on 'Thr-743', which promotes the production and the nuclear translocation of the APP intracellular domain (AICD), regulates dopaminergic neuron apoptosis. Acts as a positive regulator of innate immunity by mediating phosphorylation of RIPK2 downstream of NOD1 and NOD2, thereby enhancing RIPK2 activation. Independent of its kinase activity, inhibits the proteasomal degradation of MAPT, thus promoting MAPT oligomerization and secretion. In addition, has GTPase activity via its Roc domain which regulates LRKK2 kinase activity. Recruited by RAB29/RAB7L1 to overloaded lysosomes where it phosphorylates and stabilizes RAB8A and RAB10 which promote lysosomal content release and suppress lysosomal enlargement through the EHBP1 and EHBP1L1 effector proteins. The protein is Leucine-rich repeat serine/threonine-protein kinase 2 (Lrrk2) of Mus musculus (Mouse).